The primary structure comprises 163 residues: Nucleotide-binding protein Dde_2479 (163 aa).

It belongs to the YajQ family.

Functionally, nucleotide-binding protein. The chain is Nucleotide-binding protein Dde_2479 from Oleidesulfovibrio alaskensis (strain ATCC BAA-1058 / DSM 17464 / G20) (Desulfovibrio alaskensis).